A 506-amino-acid chain; its full sequence is Transcriptional coactivator YAP1 (506 aa).

Positions 1–38 (MDPGPPPPAAPPQAQGPPSAPPPPGQAPPSAPGPPAPP) are enriched in pro residues. The tract at residues 1–60 (MDPGPPPPAAPPQAQGPPSAPPPPGQAPPSAPGPPAPPGSQAAPQAPPAGHQIVHVRGDS) is disordered. The segment covering 39–50 (GSQAAPQAPPAG) has biased composition (low complexity). Phosphoserine is present on Ser-60. Position 62 is a phosphothreonine (Thr-62). The segment at 90–112 (LPDSFFKPPEPKAHSRQASTDAG) is disordered. Ser-104 and Ser-108 each carry phosphoserine. Phosphothreonine occurs at positions 109 and 118. Ser-126, Ser-127, Ser-130, and Ser-137 each carry phosphoserine. Residues 132-160 (QLGAVSPGTLTPTGVSSGPAAAPSAQHLR) are disordered. Low complexity predominate over residues 147-156 (SSGPAAAPSA). A Phosphoserine modification is found at Ser-163. WW domains follow at residues 170-204 (VPLP…PRKA) and 230-263 (PLPD…PRLD). A phosphoserine mark is found at Ser-273, Ser-288, Ser-369, Ser-373, Ser-384, Ser-390, Ser-399, Ser-402, and Ser-405. Disordered stretches follow at residues 274–307 (QSAP…MRLQ) and 356–416 (TLEQ…RTPD). The span at 279 to 289 (KQPPPLAPQSP) shows a compositional bias: pro residues. The transactivation domain stretch occupies residues 290–506 (PGVLGGGGSS…LDKESFLTWL (217 aa)). The segment covering 371 to 393 (GMSQELRTMTTSGSDPFLNSGTY) has biased composition (polar residues). Polar residues predominate over residues 401-411 (DSGLSMSSYSV). Tyr-409 is subject to Phosphotyrosine. The residue at position 414 (Thr-414) is a Phosphothreonine.

It belongs to the YAP1 family. As to quaternary structure, binds to the SH3 domain of the YES kinase. Binds to WBP1 and WBP2. Binds, in vitro, through the WW1 domain, to neural isoforms of ENAH that contain the PPSY motif. The phosphorylated form interacts with YWHAB. Interacts (via WW domains) with LATS1 (via PPxY motif 2). Interacts with LATS2. Interacts with TEAD1, TEAD2 and TEAD3. Interacts wih TEAD4. Interacts with TP73. Interacts with RUNX1. Interacts with HCK. Interacts (via WW domains) with PTPN14 (via PPxY motif 2); this interaction leads to the cytoplasmic sequestration of YAP1 and inhibits its transcriptional coactivator activity. Interacts (when phosphorylated at Ser-112) with SMAD2, SMAD3 and WWTR1. Interacts with PRRG2 (via cytoplasmic domain). Interacts (via WW domains) with PRRG4 (via cytoplasmic domain). Interacts (phosphorylated) with CLDN18; the interaction sequesters YAP1 away from the nucleus and thereby restricts transcription of YAP1 target genes. Interacts with SMAD1. Interacts with AMOT; the interaction facilitates translocation of YAP1 to the cytoplasm and tight junctions. Interacts with AMOTL2, the interaction is required for ubiquitination of AMOTL2 and localization of YAP1 to tight junctions. In terms of processing, phosphorylated by LATS1 and LATS2; leading to cytoplasmic translocation and inactivation. Phosphorylated by ABL1; leading to YAP1 stabilization, enhanced interaction with TP73 and recruitment onto proapoptotic genes; in response to DNA damage. Phosphorylation at Ser-402 and Ser-405 by CK1 is triggered by previous phosphorylation at Ser-399 by LATS proteins and leads to YAP1 ubiquitination by SCF(beta-TRCP) E3 ubiquitin ligase and subsequent degradation. Phosphorylated at Thr-118, Ser-137, Ser-369 and Thr-414 by MAPK8/JNK1 and MAPK9/JNK2, which is required for the regulation of apoptosis by YAP1. Phosphorylated in the nucleus by PRP4K; phosphorylation leads to nuclear exclusion. Post-translationally, ubiquitinated by SCF(beta-TRCP) E3 ubiquitin ligase.

The protein localises to the cytoplasm. It localises to the nucleus. The protein resides in the cell junction. It is found in the tight junction. Transcriptional regulator with dual roles as a coactivator and corepressor. Critical downstream regulatory target in the Hippo signaling pathway, crucial for organ size control and tumor suppression by restricting proliferation and promoting apoptosis. The Hippo signaling pathway core involves a kinase cascade featuring STK3/MST2 and STK4/MST1, along with its regulatory partner SAV1, which phosphorylates and activates LATS1/2 in complex with their regulatory protein, MOB1. This activation leads to the phosphorylation and inactivation of the YAP1 oncoprotein and WWTR1/TAZ. Phosphorylation of YAP1 by LATS1/2 prevents its nuclear translocation, thereby regulating the expression of its target genes. The transcriptional regulation of gene expression requires TEAD transcription factors and modulates cell growth, anchorage-independent growth, and induction of epithelial-mesenchymal transition (EMT). Plays a key role in tissue tension and 3D tissue shape by regulating the cortical actomyosin network, acting via ARHGAP18, a Rho GTPase activating protein that suppresses F-actin polymerization. It also suppresses ciliogenesis by acting as a transcriptional corepressor of TEAD4 target genes AURKA and PLK1. In conjunction with WWTR1, regulates TGFB1-dependent SMAD2 and SMAD3 nuclear accumulation. Synergizes with WBP2 to enhance PGR activity. This chain is Transcriptional coactivator YAP1 (YAP1), found in Canis lupus familiaris (Dog).